An 87-amino-acid chain; its full sequence is MINLLQFQILTEKSINSLESNKYTFKVDKRLNKTQIKEIFEQLFNIKVLNVNTCRSPKSFSRASKRYKSFYKKVILTVESGKLIQFV.

The protein belongs to the universal ribosomal protein uL23 family. As to quaternary structure, part of the 50S ribosomal subunit.

The protein resides in the plastid. It localises to the chloroplast. Functionally, binds to 23S rRNA. The chain is Large ribosomal subunit protein uL23c (rpl23) from Bigelowiella natans (Pedinomonas minutissima).